We begin with the raw amino-acid sequence, 252 residues long: Imidazole glycerol phosphate synthase subunit HisF (252 aa).

Residues aspartate 11 and aspartate 130 contribute to the active site.

The protein belongs to the HisA/HisF family. In terms of assembly, heterodimer of HisH and HisF.

Its subcellular location is the cytoplasm. The enzyme catalyses 5-[(5-phospho-1-deoxy-D-ribulos-1-ylimino)methylamino]-1-(5-phospho-beta-D-ribosyl)imidazole-4-carboxamide + L-glutamine = D-erythro-1-(imidazol-4-yl)glycerol 3-phosphate + 5-amino-1-(5-phospho-beta-D-ribosyl)imidazole-4-carboxamide + L-glutamate + H(+). It participates in amino-acid biosynthesis; L-histidine biosynthesis; L-histidine from 5-phospho-alpha-D-ribose 1-diphosphate: step 5/9. Its function is as follows. IGPS catalyzes the conversion of PRFAR and glutamine to IGP, AICAR and glutamate. The HisF subunit catalyzes the cyclization activity that produces IGP and AICAR from PRFAR using the ammonia provided by the HisH subunit. This Polynucleobacter asymbioticus (strain DSM 18221 / CIP 109841 / QLW-P1DMWA-1) (Polynucleobacter necessarius subsp. asymbioticus) protein is Imidazole glycerol phosphate synthase subunit HisF.